The primary structure comprises 88 residues: Small ribosomal subunit protein uS15 (88 aa).

The protein belongs to the universal ribosomal protein uS15 family. As to quaternary structure, part of the 30S ribosomal subunit. Forms a bridge to the 50S subunit in the 70S ribosome, contacting the 23S rRNA.

Its function is as follows. One of the primary rRNA binding proteins, it binds directly to 16S rRNA where it helps nucleate assembly of the platform of the 30S subunit by binding and bridging several RNA helices of the 16S rRNA. Functionally, forms an intersubunit bridge (bridge B4) with the 23S rRNA of the 50S subunit in the ribosome. The polypeptide is Small ribosomal subunit protein uS15 (Mesoplasma florum (strain ATCC 33453 / NBRC 100688 / NCTC 11704 / L1) (Acholeplasma florum)).